Consider the following 722-residue polypeptide: MLKKSVKIGESELSIEVGRLAKQADGSVVVRYGDTMLLVTAVSAREKKDIDFLPLTVEYQEKLYSAGRIPGSYFKREGRLTEKETLASRLVDRSCRPLFPEGYAYETQIIASVISSDPENEGDIHGITGASAALWVSDIPFDGPIAGIRVGRVGGQLVANPTAKQREQSDLDLVMAVSRKAIVMVEGGAEEVSEADMVAALDFGFTTAQPALDLQDELRRELNKQVRSFEKPAAVDEGLRAKVRELAMDGIKAGYGIKEKGARYEALGKTKKEALAKLKEQLGDGYTPLVEKHAKAVVEDLKYEHMREMTVNGGRIGDRGHDVVRSITCEVGVLPRTHGSAVFTRGETQALVVTTLGTSDDEQRLEMLGGMAFKRFMLHYNFPPFSVNETKPLRGPGRREVGHGALAERALRNMVPKSESFPYTVRLVSDILESNGSSSMASVCGGTLALMDAGVPLKAPVAGIAMGLVKEGDKIAILSDILGDEDHLGDMDFKVCGTSKGITSIQMDIKITGLTTEIMSRALEQARQGRLHILGEMLKTLAESRKEISQYAPRITTIQIRPEFIKNVIGPGGKVIKDIIARTGAAINIEDSGRVDIASANGEAVKAAIAMIQALTREAEIGKIYTGTVRKIAEFGAFVELFPGTDGLIHISELSDKRVKSVSDVLNEGDEVLVKVVSIDKTGKIRLSRKEAMAERAAQQGAAAGEAAAQPAPAPTQPDAKA.

The Mg(2+) site is built by Asp-486 and Asp-492. A KH domain is found at 553–612; it reads PRITTIQIRPEFIKNVIGPGGKVIKDIIARTGAAINIEDSGRVDIASANGEAVKAAIAMI. Positions 622–690 constitute an S1 motif domain; the sequence is GKIYTGTVRK…KTGKIRLSRK (69 aa). The interval 696–722 is disordered; sequence RAAQQGAAAGEAAAQPAPAPTQPDAKA.

Belongs to the polyribonucleotide nucleotidyltransferase family. Requires Mg(2+) as cofactor.

The protein resides in the cytoplasm. The enzyme catalyses RNA(n+1) + phosphate = RNA(n) + a ribonucleoside 5'-diphosphate. Involved in mRNA degradation. Catalyzes the phosphorolysis of single-stranded polyribonucleotides processively in the 3'- to 5'-direction. The chain is Polyribonucleotide nucleotidyltransferase from Myxococcus xanthus (strain DK1622).